A 186-amino-acid polypeptide reads, in one-letter code: ATP synthase subunit delta (186 aa).

Belongs to the ATPase delta chain family. As to quaternary structure, F-type ATPases have 2 components, F(1) - the catalytic core - and F(0) - the membrane proton channel. F(1) has five subunits: alpha(3), beta(3), gamma(1), delta(1), epsilon(1). F(0) has three main subunits: a(1), b(2) and c(10-14). The alpha and beta chains form an alternating ring which encloses part of the gamma chain. F(1) is attached to F(0) by a central stalk formed by the gamma and epsilon chains, while a peripheral stalk is formed by the delta and b chains.

The protein localises to the cell inner membrane. Its function is as follows. F(1)F(0) ATP synthase produces ATP from ADP in the presence of a proton or sodium gradient. F-type ATPases consist of two structural domains, F(1) containing the extramembraneous catalytic core and F(0) containing the membrane proton channel, linked together by a central stalk and a peripheral stalk. During catalysis, ATP synthesis in the catalytic domain of F(1) is coupled via a rotary mechanism of the central stalk subunits to proton translocation. This protein is part of the stalk that links CF(0) to CF(1). It either transmits conformational changes from CF(0) to CF(1) or is implicated in proton conduction. This chain is ATP synthase subunit delta, found in Brucella abortus (strain S19).